We begin with the raw amino-acid sequence, 132 residues long: Agouti-signaling protein (132 aa).

Positions 1–22 (MDVTRLLLATLLVFLCFFTVYS) are cleaved as a signal peptide. An N-linked (GlcNAc...) asparagine glycan is attached at N39. Residues 62 to 93 (ISRKEAEKKRSSKKEASMKKVAQPRTPLSAPC) are disordered. The span at 63–79 (SRKEAEKKRSSKKEASM) shows a compositional bias: basic and acidic residues. Cystine bridges form between C93–C108, C100–C114, C107–C125, C111–C132, and C116–C123. The region spanning 93–132 (CVATRDSCKPPAPACCDPCASCQCRFFRSACSCRVLSLNC) is the Agouti domain.

The protein resides in the secreted. Its function is as follows. Involved in the regulation of melanogenesis. The binding of ASP to MC1R precludes alpha-MSH initiated signaling and thus blocks production of cAMP, leading to a down-regulation of eumelanogenesis (brown/black pigment) and thus increasing synthesis of pheomelanin (yellow/red pigment). The protein is Agouti-signaling protein (ASIP) of Trachypithecus auratus (Javan langur).